The following is a 404-amino-acid chain: Probable ketol-acid reductoisomerase, mitochondrial (404 aa).

The region spanning 63–253 (TKENVWERSD…AVGSGFIYQT (191 aa)) is the KARI N-terminal Rossmann domain. Residues 91–100 (GYGSQGHGQG), 115–120 (RKDGAS), and 153–157 (SDAAQ) each bind NADP(+). Residue histidine 178 is part of the active site. One can recognise a KARI C-terminal knotted domain in the interval 254 to 401 (TFKKEVISDL…EVVRSLRPEH (148 aa)). Serine 261 carries the post-translational modification Phosphoserine. Residues aspartate 262, glutamate 266, glutamate 298, and glutamate 302 each coordinate Mg(2+). Serine 324 contacts substrate.

Belongs to the ketol-acid reductoisomerase family. Mg(2+) is required as a cofactor.

The protein localises to the mitochondrion. It catalyses the reaction (2R)-2,3-dihydroxy-3-methylbutanoate + NADP(+) = (2S)-2-acetolactate + NADPH + H(+). The enzyme catalyses (2R,3R)-2,3-dihydroxy-3-methylpentanoate + NADP(+) = (S)-2-ethyl-2-hydroxy-3-oxobutanoate + NADPH + H(+). It participates in amino-acid biosynthesis; L-isoleucine biosynthesis; L-isoleucine from 2-oxobutanoate: step 2/4. Its pathway is amino-acid biosynthesis; L-valine biosynthesis; L-valine from pyruvate: step 2/4. In Schizosaccharomyces pombe (strain 972 / ATCC 24843) (Fission yeast), this protein is Probable ketol-acid reductoisomerase, mitochondrial (ilv5).